Here is a 222-residue protein sequence, read N- to C-terminus: Eukaryotic translation initiation factor 3 subunit K (222 aa).

A PCI domain is found at 46–208; sequence YDLEANLAVL…KIKTKNITEK (163 aa).

The protein belongs to the eIF-3 subunit K family. As to quaternary structure, component of the eukaryotic translation initiation factor 3 (eIF-3) complex. The eIF-3 complex interacts with pix.

It is found in the cytoplasm. In terms of biological role, component of the eukaryotic translation initiation factor 3 (eIF-3) complex, which is involved in protein synthesis of a specialized repertoire of mRNAs and, together with other initiation factors, stimulates binding of mRNA and methionyl-tRNAi to the 40S ribosome. The eIF-3 complex specifically targets and initiates translation of a subset of mRNAs involved in cell proliferation. The chain is Eukaryotic translation initiation factor 3 subunit K from Drosophila virilis (Fruit fly).